The following is a 2234-amino-acid chain: RNA-directed RNA polymerase L (2234 aa).

The tract at residues 26–283 is endonuclease; it reads ITVVTSQTEM…INLSDEKLSC (258 aa). Mn(2+)-binding residues include E51, D89, and E102. K115 is a catalytic residue. The segment covering 879-891 has biased composition (basic and acidic residues); sequence KRDDHMKDSEDSK. Disordered regions lie at residues 879–898 and 927–949; these read KRDD…SSDL and KLKE…QQKR. The segment covering 935–945 has biased composition (polar residues); sequence RQSSSGSSLKN. In terms of domain architecture, RdRp catalytic spans 1184–1383; that stretch reads MEMKMSVNLG…FISSKFNKFV (200 aa). Position 1342 (D1342) interacts with Mg(2+).

This sequence belongs to the Bunyavirales RNA polymerase family. In terms of assembly, homomultimer; the oligomeric structure is essential for the polymerase activity. Interacts with nucleoprotein N. Interacts with protein Z; this interaction inhibits viral transcription and replication, Z partially blocks the product exit tunnel for the releasing nascent RNA product. Requires Mn(2+) as cofactor. The cofactor is Mg(2+).

It is found in the virion. It localises to the host cytoplasm. The catalysed reaction is RNA(n) + a ribonucleoside 5'-triphosphate = RNA(n+1) + diphosphate. RNA-dependent RNA polymerase, which is responsible for the replication and transcription of the viral RNA genome using antigenomic RNA as an intermediate. During transcription, synthesizes subgenomic RNAs and assures their capping by a cap-snatching mechanism, which involves the endonuclease activity cleaving the host capped pre-mRNAs. These short capped RNAs are then used as primers for viral transcription. The 3'-end of subgenomic mRNAs molecules are heterogeneous and not polyadenylated. The replicase function is to direct synthesis of antigenomic and genomic RNA which are encapsidated and non capped. As a consequence of the use of the same enzyme for both transcription and replication, these mechanisms need to be well coordinated. These processes may be regulated by proteins N and Z in a dose-dependent manner. Z protein inhibits the viral polymerase L und thus the viral transcription and RNA synthesis. The sequence is that of RNA-directed RNA polymerase L from Bolomys (OLVV).